Consider the following 614-residue polypeptide: 1-deoxy-D-xylulose-5-phosphate synthase (614 aa).

Thiamine diphosphate is bound by residues His-74 and 115 to 117 (AHS). Asp-146 is a Mg(2+) binding site. Residues 147–148 (GA), Asn-175, Tyr-282, and Glu-363 each bind thiamine diphosphate. Asn-175 provides a ligand contact to Mg(2+).

Belongs to the transketolase family. DXPS subfamily. In terms of assembly, homodimer. Mg(2+) is required as a cofactor. It depends on thiamine diphosphate as a cofactor.

The enzyme catalyses D-glyceraldehyde 3-phosphate + pyruvate + H(+) = 1-deoxy-D-xylulose 5-phosphate + CO2. It functions in the pathway metabolic intermediate biosynthesis; 1-deoxy-D-xylulose 5-phosphate biosynthesis; 1-deoxy-D-xylulose 5-phosphate from D-glyceraldehyde 3-phosphate and pyruvate: step 1/1. Its function is as follows. Catalyzes the acyloin condensation reaction between C atoms 2 and 3 of pyruvate and glyceraldehyde 3-phosphate to yield 1-deoxy-D-xylulose-5-phosphate (DXP). This Nitrosomonas eutropha (strain DSM 101675 / C91 / Nm57) protein is 1-deoxy-D-xylulose-5-phosphate synthase.